We begin with the raw amino-acid sequence, 251 residues long: uncharacterized protein (251 aa).

The N-terminal stretch at 1-18 is a signal peptide; it reads MRILIILSIILCSLSIRA.

This sequence belongs to the MlaA family.

This is an uncharacterized protein from Rickettsia conorii (strain ATCC VR-613 / Malish 7).